The chain runs to 248 residues: Triosephosphate isomerase (248 aa).

9-11 is a substrate binding site; it reads NWK. Residue His94 is the Electrophile of the active site. The active-site Proton acceptor is the Glu166. Substrate contacts are provided by residues Gly172, Ser212, and 233–234; that span reads GG.

The protein belongs to the triosephosphate isomerase family. As to quaternary structure, homodimer.

The protein resides in the cytoplasm. The catalysed reaction is D-glyceraldehyde 3-phosphate = dihydroxyacetone phosphate. The protein operates within carbohydrate biosynthesis; gluconeogenesis. Its pathway is carbohydrate degradation; glycolysis; D-glyceraldehyde 3-phosphate from glycerone phosphate: step 1/1. In terms of biological role, involved in the gluconeogenesis. Catalyzes stereospecifically the conversion of dihydroxyacetone phosphate (DHAP) to D-glyceraldehyde-3-phosphate (G3P). In Thermoanaerobacter sp. (strain X514), this protein is Triosephosphate isomerase.